We begin with the raw amino-acid sequence, 206 residues long: Ribosomal RNA large subunit methyltransferase E (206 aa).

Positions 63, 65, 83, 99, and 124 each coordinate S-adenosyl-L-methionine. Catalysis depends on K164, which acts as the Proton acceptor.

This sequence belongs to the class I-like SAM-binding methyltransferase superfamily. RNA methyltransferase RlmE family.

It localises to the cytoplasm. The catalysed reaction is uridine(2552) in 23S rRNA + S-adenosyl-L-methionine = 2'-O-methyluridine(2552) in 23S rRNA + S-adenosyl-L-homocysteine + H(+). In terms of biological role, specifically methylates the uridine in position 2552 of 23S rRNA at the 2'-O position of the ribose in the fully assembled 50S ribosomal subunit. The chain is Ribosomal RNA large subunit methyltransferase E from Buchnera aphidicola subsp. Schizaphis graminum (strain Sg).